The following is a 99-amino-acid chain: Large ribosomal subunit protein bL27 (99 aa).

Positions 1–9 (MLIMNLQLF) are excised as a propeptide.

Belongs to the bacterial ribosomal protein bL27 family. Post-translationally, the N-terminus is cleaved by ribosomal processing cysteine protease Prp.

This chain is Large ribosomal subunit protein bL27, found in Clostridium beijerinckii (strain ATCC 51743 / NCIMB 8052) (Clostridium acetobutylicum).